Here is a 1429-residue protein sequence, read N- to C-terminus: MRIPTICFLFLLISLSKSLHIGSCLGLICGRNGHCHAGPVNGTQTSYWCRCDEGFGGEYCEQQCDVSKCGADEKCVFDKDYRMETCVCKDCDINGNSLLKPSCPSGYGGDDCKTQGWCYPSVCMNGGQCIGAGNRAKCACPDGFKGERCELDVNECEENKNACGNRSTCMNTLGTYICVCPQGFLPPDCLKPGNTSTVEFKQPVCFLEISADHPDGRSMYCQNGGFCDKASSKCQCPPGYHGSTCELLEKEDSCASNPCSHGVCISFSGGFQCICDDGYSGSYCQEGKDNCVNNKCEAGSKCINGVNSYFCDCPPERTGPYCEKMDCSAIPDICNHGTCIDSPLSEKAFECQCEPGYEGILCEQDKNECLSENMCLNNGTCVNLPGSFRCDCARGFGGKWCDEPLNMCQDFHCENDGTCMHTSDHSPVCQCKNGFIGKRCEKECPIGFGGVRCDLRLEIGICSRQGGKCFNGGKCLSGFCVCPPDFTGNQCEVNRKNGKSSLSENLCLSDPCMNNATCIDVDAHIGYACICKQGFEGDICERHKDLCLENPCSNGGVCHQHRESFSCDCPPGFYGNGCEQEKMFRCLKSTCQNGGVCINEEEKGRKCECSYGFSGARCEEKINLTGFTEKDSLLRSVCEKRKCSERANDGNCDADCNYAACKFDGGDCSGKREPFSKCRYGNMCADFFANGVCNQACNNEECLYDGMDCLPAVVRCPVKIREHCASRFANGICDPECNTNGCGFDGGDCDNETNATIITNIRITVQMDPKEFQVTGGQSLMEISSALRVTVRIQRDEEGPLVFQWNGESEMDRVKMNERQLTEQHVLSTSISRKIKRSATNIGVVVYLEVQENCDTGKCLYKDAQSVVDSISARLAKKGIDSFGIPISEALVAEPRKSGNNTGFLSWNALLLIGAGCLIVMVVLMLGALPGNRTRKRRMINASVWMPPMENEEKNRKNHQSITSSQHSLLEASYDGYIKRQRNELQHYSLYPNPQGYGNGNDFLGDFNHTNLQIPTEPEPESPIKLHTEAAGSYAITEPITRESVNIIDPRHNRTVLHWIASNSSAEKSEDLIVHEAKECIAAGADVNAMDCDENTPLMLAVLARRRRLVAYLMKAGADPTIYNKSERSALHQAAANRDFGMMVYMLNSTKLKGDIEELDRNGMTALMIVAHNEGRDQVASAKLLVEKGAKVDYDGAARKDSEKYKGRTALHYAAQVSNMPIVKYLVGEKGSNKDKQDEDGKTPIMLAAQEGRIEVVMYLIQQGASVEAVDATDHTARQLAQANNHHNIVDIFDRCRPEREYSMDLHIQHTHQPQPSRKVTRAPKKQTSRSKKESASNSRDSTHLTPPPSDGSTSTPSPQHFMNTTHTTPTSLNYLSPEYQTEAGSSEAFQPQCGAFGNGEMWYTRASTSYTQMQNEPMTRYSEPAHYF.

Residues 1 to 15 (MRIPTICFLFLLISL) form the signal peptide. Topologically, residues 16–908 (SKSLHIGSCL…GNNTGFLSWN (893 aa)) are extracellular. 2 consecutive EGF-like domains span residues 20–61 (HIGS…EYCE) and 114–150 (TQGW…ERCE). Cystine bridges form between cysteine 24/cysteine 35, cysteine 29/cysteine 49, cysteine 51/cysteine 60, cysteine 118/cysteine 129, cysteine 123/cysteine 138, cysteine 140/cysteine 149, cysteine 156/cysteine 169, cysteine 163/cysteine 178, and cysteine 180/cysteine 189. Asparagine 41 carries N-linked (GlcNAc...) asparagine glycosylation. The EGF-like 3; calcium-binding domain maps to 152 to 190 (DVNECEENKNACGNRSTCMNTLGTYICVCPQGFLPPDCL). Asparagine 165 is a glycosylation site (N-linked (GlcNAc...) asparagine). N-linked (GlcNAc...) asparagine glycosylation is present at asparagine 194. EGF-like domains are found at residues 201-246 (KQPV…STCE), 250-285 (KEDS…SYCQ), 287-323 (GKDN…PYCE), and 323-363 (EKMD…ILCE). 30 disulfides stabilise this stretch: cysteine 205-cysteine 227, cysteine 221-cysteine 234, cysteine 236-cysteine 245, cysteine 254-cysteine 264, cysteine 259-cysteine 273, cysteine 275-cysteine 284, cysteine 291-cysteine 302, cysteine 296-cysteine 311, cysteine 313-cysteine 322, cysteine 327-cysteine 339, cysteine 334-cysteine 351, cysteine 353-cysteine 362, cysteine 369-cysteine 381, cysteine 375-cysteine 390, cysteine 392-cysteine 401, cysteine 408-cysteine 419, cysteine 413-cysteine 429, cysteine 431-cysteine 440, cysteine 462-cysteine 475, cysteine 469-cysteine 480, cysteine 482-cysteine 491, cysteine 507-cysteine 518, cysteine 512-cysteine 529, cysteine 531-cysteine 540, cysteine 547-cysteine 558, cysteine 552-cysteine 567, cysteine 569-cysteine 578, cysteine 586-cysteine 597, cysteine 591-cysteine 607, and cysteine 609-cysteine 618. Positions 365–402 (DKNECLSENMCLNNGTCVNLPGSFRCDCARGFGGKWCD) constitute an EGF-like 8; calcium-binding domain. N-linked (GlcNAc...) asparagine glycosylation is present at asparagine 378. 5 consecutive EGF-like domains span residues 404-441 (PLNM…KRCE), 449-492 (GGVR…NQCE), 503-541 (SENL…DICE), 543-579 (HKDL…NGCE), and 582-619 (KMFR…ARCE). An N-linked (GlcNAc...) asparagine glycan is attached at asparagine 515. A glycan (N-linked (GlcNAc...) asparagine) is linked at asparagine 623. 9 cysteine pairs are disulfide-bonded: cysteine 638–cysteine 661, cysteine 643–cysteine 656, cysteine 652–cysteine 668, cysteine 678–cysteine 702, cysteine 684–cysteine 697, cysteine 693–cysteine 709, cysteine 716–cysteine 742, cysteine 724–cysteine 737, and cysteine 733–cysteine 749. 3 LNR repeats span residues 638-674 (CEKR…KREP), 678-709 (CRYG…GMDC), and 716-754 (CPVK…NETN). Residues asparagine 751, asparagine 754, and asparagine 900 are each glycosylated (N-linked (GlcNAc...) asparagine). The chain crosses the membrane as a helical span at residues 909–931 (ALLLIGAGCLIVMVVLMLGALPG). Residues 932–1429 (NRTRKRRMIN…TRYSEPAHYF (498 aa)) are Cytoplasmic-facing. Positions 933–952 (RTRKRRMINASVWMPPMENE) are RAM domain. ANK repeat units lie at residues 1093-1122 (DENT…DPTI), 1126-1158 (SERS…DIEE), 1162-1194 (NGMT…KVDY), 1206-1236 (KGRT…NKDK), and 1240-1269 (DGKT…SVEA). The segment at 1308–1374 (IQHTHQPQPS…TTHTTPTSLN (67 aa)) is disordered. Basic residues predominate over residues 1319–1330 (KVTRAPKKQTSR). The segment covering 1361–1374 (HFMNTTHTTPTSLN) has biased composition (polar residues).

This sequence belongs to the NOTCH family. As to quaternary structure, may interact with dsl-1. May interact with lag-2. May interact with osm-11. Interacts with sel-10. When activated, the lin-12/Notch intracellular domain (NICD) can become a component of a complex consisting of at least the NICD, lag-1 and sel-8/lag-3. The NICD probably facilitates ordered assembly of the ternary complex via allosteric interactions of its RBP-j associated molecule (RAM) domain with lag-1. Upon binding its ligands, it is cleaved (S2 cleavage) in its extracellular domain, close to the transmembrane domain. S2 cleavage is probably mediated by the metalloproteases adm-4 and sup-17. It is then cleaved (S3 cleavage) downstream of its transmembrane domain, releasing it from the cell membrane; S3 cleavage requires a multiprotein gamma-secretase complex, which may include presenilin sel-12.

It localises to the apical cell membrane. The protein resides in the nucleus. Its function is as follows. Essential signaling protein which has a major role in many developmental processes; involved in cell fate decisions that require cell-cell interactions. Probable membrane-bound receptor for putative ligands lag-2, apx-1, dsl-1 and osm-11. Upon ligand activation, and releasing from the cell membrane, the lin-12/Notch intracellular domain (NICD) forms a transcriptional activator complex with lag-1 and lag-3 and regulates expression of various genes. Required for ventral cell fates in the postembryonic mesodermal lineage (M lineage) and in uterine precursor cells. Activity in cell fate decisions and tumorigenesis is negatively regulated by sel-10. Best known for involvement in cell-fate decisions during development, but also plays roles in other events. Regulates recovery from the dauer larval state. Modulates chemosensory avoidance of octanol and quiescence during molting. Promotes basement membrane mobility during tissue remodeling. Involved in establishing left-right asymmetry during intestinal organogenesis. The polypeptide is Protein lin-12 (Caenorhabditis elegans).